A 178-amino-acid chain; its full sequence is Endoribonuclease YbeY (178 aa).

Zn(2+) is bound by residues histidine 118, histidine 122, and histidine 128. A disordered region spans residues 156-178 (YQQDRQDERDRRLLDKSRYFDEP). Basic and acidic residues predominate over residues 159 to 178 (DRQDERDRRLLDKSRYFDEP).

Belongs to the endoribonuclease YbeY family. Requires Zn(2+) as cofactor.

The protein localises to the cytoplasm. Functionally, single strand-specific metallo-endoribonuclease involved in late-stage 70S ribosome quality control and in maturation of the 3' terminus of the 16S rRNA. The sequence is that of Endoribonuclease YbeY from Mycobacterium marinum (strain ATCC BAA-535 / M).